Reading from the N-terminus, the 180-residue chain is ATP synthase subunit delta (180 aa).

Belongs to the ATPase delta chain family. F-type ATPases have 2 components, F(1) - the catalytic core - and F(0) - the membrane proton channel. F(1) has five subunits: alpha(3), beta(3), gamma(1), delta(1), epsilon(1). F(0) has three main subunits: a(1), b(2) and c(10-14). The alpha and beta chains form an alternating ring which encloses part of the gamma chain. F(1) is attached to F(0) by a central stalk formed by the gamma and epsilon chains, while a peripheral stalk is formed by the delta and b chains.

It is found in the cell membrane. In terms of biological role, f(1)F(0) ATP synthase produces ATP from ADP in the presence of a proton or sodium gradient. F-type ATPases consist of two structural domains, F(1) containing the extramembraneous catalytic core and F(0) containing the membrane proton channel, linked together by a central stalk and a peripheral stalk. During catalysis, ATP synthesis in the catalytic domain of F(1) is coupled via a rotary mechanism of the central stalk subunits to proton translocation. Functionally, this protein is part of the stalk that links CF(0) to CF(1). It either transmits conformational changes from CF(0) to CF(1) or is implicated in proton conduction. The polypeptide is ATP synthase subunit delta (Leuconostoc citreum (strain KM20)).